A 97-amino-acid polypeptide reads, in one-letter code: Putative membrane protein insertion efficiency factor (97 aa).

Belongs to the UPF0161 family.

The protein resides in the cell membrane. Could be involved in insertion of integral membrane proteins into the membrane. The polypeptide is Putative membrane protein insertion efficiency factor (Lactobacillus gasseri (strain ATCC 33323 / DSM 20243 / BCRC 14619 / CIP 102991 / JCM 1131 / KCTC 3163 / NCIMB 11718 / NCTC 13722 / AM63)).